The primary structure comprises 429 residues: 26S proteasome regulatory subunit RPN7 (429 aa).

Residues S8 and S77 each carry the phosphoserine modification. The TPR repeat unit spans residues 131-164 (AQAWINLGEYYAQIGDKDNAEKTLGKSLSKAIST). The PCI domain maps to 223–395 (NFKEAAKLLV…GIVETNRPDN (173 aa)).

As to quaternary structure, the 26S proteasome is composed of a core protease, known as the 20S proteasome, capped at one or both ends by the 19S regulatory complex (RC). The RC is composed of at least 18 different subunits in two subcomplexes, the base and the lid, which form the portions proximal and distal to the 20S proteolytic core, respectively. Component of the lid subcomplex of the 19S RC.

It localises to the nucleus. Component of the 19S cap proteasome complex which acts as a regulatory subunit of the 26S proteasome, involved in the ATP-dependent degradation of ubiquitinated proteins. The polypeptide is 26S proteasome regulatory subunit RPN7 (Saccharomyces cerevisiae (strain ATCC 204508 / S288c) (Baker's yeast)).